A 176-amino-acid polypeptide reads, in one-letter code: Insulin-like growth factor 1 (176 aa).

Positions 45-73 (GPETLCGAELVDTLQFVCGERGFYFSKPT) are b. 3 cysteine pairs are disulfide-bonded: C50-C92, C62-C105, and C91-C96. Residues 74–85 (GYGPSSRRSHNR) form a c region. The a stretch occupies residues 86 to 106 (GIVDECCFQSCELRRLEMYCA). Positions 107 to 114 (PVKSGKAA) are d. Residues 115–176 (RSVRAQRHTD…GNTGGRNYRM (62 aa)) constitute a propeptide, e peptide. Residues 115–176 (RSVRAQRHTD…GNTGGRNYRM (62 aa)) are disordered. Over residues 140 to 161 (RGTERRTAQHPDKTKPKKEVHQ) the composition is skewed to basic and acidic residues.

It belongs to the insulin family.

The protein localises to the secreted. In terms of biological role, the insulin-like growth factors, isolated from plasma, are structurally and functionally related to insulin but have a much higher growth-promoting activity. Acts as a ligand for IGF1R. Binds to the alpha subunit of IGF1R, leading to the activation of the intrinsic tyrosine kinase activity which autophosphorylates tyrosine residues in the beta subunit thus initiatiating a cascade of down-stream signaling events leading to activation of the PI3K-AKT/PKB and the Ras-MAPK pathways. Binds to integrins. Its binding to integrins and subsequent ternary complex formation with integrins and IGFR1 are essential for IGF1 signaling. This Oncorhynchus mykiss (Rainbow trout) protein is Insulin-like growth factor 1.